The following is a 374-amino-acid chain: MSDKTQNTKPVAELNVEQVKEALIEEGKKKGILTYAKIAARLAPFTLDSDQMDEYLEHVGEAGIEVSDDADDEDPDETELVKEETESFDLTDMSVPPGVKINDPVRMYLKEIGRVDLLTADEEIALAKRIEAGDIEAKGRLAEANLRLVVSIAKRYVGRGMLFLDLIQEGNMGLMKAVEKFDFNKGFKFSTYATWWIRQAITRAIADQARTIRIPVHMVETINKLIRVQRSLLQDLGRDPSPEEIGEEMDLPTEKVREILKIAQEPVSLETPIGEEDDSHLGDFIEDQDATSPSDHAAYELLKEQLEDVLDTLTDREENVLRLRFGLDDGRTRTLEEVGRVFGVTRERIRQIEAKALRKLRHPSRSKQLKDFLE.

The interval 141–211 (LAEANLRLVV…TRAIADQART (71 aa)) is sigma-70 factor domain-2. Residues 165-168 (DLIQ) carry the Interaction with polymerase core subunit RpoC motif. The interval 220 to 296 (ETINKLIRVQ…DQDATSPSDH (77 aa)) is sigma-70 factor domain-3. The tract at residues 309 to 362 (VLDTLTDREENVLRLRFGLDDGRTRTLEEVGRVFGVTRERIRQIEAKALRKLRH) is sigma-70 factor domain-4. Residues 335–354 (LEEVGRVFGVTRERIRQIEA) constitute a DNA-binding region (H-T-H motif).

This sequence belongs to the sigma-70 factor family. RpoD/SigA subfamily. As to quaternary structure, interacts transiently with the RNA polymerase catalytic core.

It is found in the cytoplasm. Its function is as follows. Sigma factors are initiation factors that promote the attachment of RNA polymerase to specific initiation sites and are then released. This sigma factor is the primary sigma factor during exponential growth. In Listeria innocua serovar 6a (strain ATCC BAA-680 / CLIP 11262), this protein is RNA polymerase sigma factor SigA.